We begin with the raw amino-acid sequence, 118 residues long: Vacuolar ATPase assembly integral membrane protein vma-21 (118 aa).

The Cytoplasmic segment spans residues M1–A35. A helical membrane pass occupies residues V36–I56. The Lumenal segment spans residues S57–Y73. The helical transmembrane segment at A74–M94 threads the bilayer. The Cytoplasmic segment spans residues A95–L118. The segment at Q98–L118 is disordered. Residues E102–L118 are compositionally biased toward basic and acidic residues. The Prevents secretion from ER signature appears at K115–L118.

It belongs to the VMA21 family.

Its subcellular location is the endoplasmic reticulum membrane. It is found in the endoplasmic reticulum-Golgi intermediate compartment membrane. It localises to the cytoplasmic vesicle. The protein localises to the COPII-coated vesicle membrane. In terms of biological role, required for the assembly of the V0 complex of the vacuolar ATPase (V-ATPase) in the endoplasmic reticulum. In Neurospora crassa (strain ATCC 24698 / 74-OR23-1A / CBS 708.71 / DSM 1257 / FGSC 987), this protein is Vacuolar ATPase assembly integral membrane protein vma-21 (vma-21).